A 422-amino-acid chain; its full sequence is L-threonine dehydratase biosynthetic IlvA (422 aa).

The residue at position 56 (Lys-56) is an N6-(pyridoxal phosphate)lysine. Pyridoxal 5'-phosphate-binding positions include Asn-83, 189–193 (GGGGL), and Ser-315. The ACT-like domain occupies 339 to 413 (HYFILNFPQR…FDPSNIYINE (75 aa)).

The protein belongs to the serine/threonine dehydratase family. Homotetramer. It depends on pyridoxal 5'-phosphate as a cofactor.

It catalyses the reaction L-threonine = 2-oxobutanoate + NH4(+). It participates in amino-acid biosynthesis; L-isoleucine biosynthesis; 2-oxobutanoate from L-threonine: step 1/1. Its function is as follows. Catalyzes the anaerobic formation of alpha-ketobutyrate and ammonia from threonine in a two-step reaction. The first step involved a dehydration of threonine and a production of enamine intermediates (aminocrotonate), which tautomerizes to its imine form (iminobutyrate). Both intermediates are unstable and short-lived. The second step is the nonenzymatic hydrolysis of the enamine/imine intermediates to form 2-ketobutyrate and free ammonia. In the low water environment of the cell, the second step is accelerated by RidA. This chain is L-threonine dehydratase biosynthetic IlvA (ilvA), found in Staphylococcus epidermidis (strain ATCC 12228 / FDA PCI 1200).